We begin with the raw amino-acid sequence, 215 residues long: Cytochrome b6 (215 aa).

A helical membrane pass occupies residues 32-52 (IFYCLGGITLTCFLVQVATGF). Cys35 contributes to the heme c binding site. Residues His86 and His100 each contribute to the heme b site. Transmembrane regions (helical) follow at residues 90-110 (ASMM…TGGF), 116-136 (LTWV…VTGY), and 186-206 (LHTF…FPMI). Residues His187 and His202 each contribute to the heme b site.

The protein belongs to the cytochrome b family. PetB subfamily. As to quaternary structure, the 4 large subunits of the cytochrome b6-f complex are cytochrome b6, subunit IV (17 kDa polypeptide, PetD), cytochrome f and the Rieske protein, while the 4 small subunits are PetG, PetL, PetM and PetN. The complex functions as a dimer. Requires heme b as cofactor. It depends on heme c as a cofactor.

Its subcellular location is the plastid. It localises to the chloroplast thylakoid membrane. Component of the cytochrome b6-f complex, which mediates electron transfer between photosystem II (PSII) and photosystem I (PSI), cyclic electron flow around PSI, and state transitions. In Populus alba (White poplar), this protein is Cytochrome b6.